A 241-amino-acid polypeptide reads, in one-letter code: Probable transcriptional regulatory protein Reut_A2522 (241 aa).

The protein belongs to the TACO1 family.

The protein resides in the cytoplasm. The sequence is that of Probable transcriptional regulatory protein Reut_A2522 from Cupriavidus pinatubonensis (strain JMP 134 / LMG 1197) (Cupriavidus necator (strain JMP 134)).